We begin with the raw amino-acid sequence, 233 residues long: DnaA regulatory inactivator Hda (233 aa).

This sequence belongs to the DnaA family. HdA subfamily. As to quaternary structure, the active form seems to be an ADP-bound monomer. Forms the RIDA complex (regulatory inactivation of DnaA) of ATP-DnaA, ADP-Hda and the DNA-loaded beta sliding clamp (dnaN).

In terms of biological role, mediates the interaction of DNA replication initiator protein DnaA with DNA polymerase subunit beta sliding clamp (dnaN). Stimulates hydrolysis of ATP-DnaA to ADP-DnaA, rendering DnaA inactive for reinitiation, a process called regulatory inhibition of DnaA or RIDA. This chain is DnaA regulatory inactivator Hda, found in Photorhabdus laumondii subsp. laumondii (strain DSM 15139 / CIP 105565 / TT01) (Photorhabdus luminescens subsp. laumondii).